Here is a 107-residue protein sequence, read N- to C-terminus: U1-lycotoxin-Ls1c (107 aa).

The first 20 residues, 1-20 (MMKVLVVVALLVTLISYSSS), serve as a signal peptide directing secretion. Positions 21–41 (EGIDDLEADELLSLMANEQTR) are excised as a propeptide. Disulfide bonds link Cys44–Cys59, Cys51–Cys68, Cys58–Cys86, and Cys70–Cys84.

It belongs to the neurotoxin 19 (CSTX) family. 04 (U1-Lctx) subfamily. Expressed by the venom gland.

It is found in the secreted. In Lycosa singoriensis (Wolf spider), this protein is U1-lycotoxin-Ls1c.